The chain runs to 394 residues: Phosphoglycerate kinase (394 aa).

Residues 21-23 (DFN), R36, 59-62 (HLGR), R118, and R151 contribute to the substrate site. S183 is subject to Phosphoserine. Residues K201 and G292 each coordinate ATP. Residue T299 is modified to Phosphothreonine. Residues E323 and 350-353 (GGDS) each bind ATP.

The protein belongs to the phosphoglycerate kinase family. As to quaternary structure, monomer.

Its subcellular location is the cytoplasm. The catalysed reaction is (2R)-3-phosphoglycerate + ATP = (2R)-3-phospho-glyceroyl phosphate + ADP. The protein operates within carbohydrate degradation; glycolysis; pyruvate from D-glyceraldehyde 3-phosphate: step 2/5. The protein is Phosphoglycerate kinase of Anoxybacillus flavithermus (strain DSM 21510 / WK1).